A 93-amino-acid chain; its full sequence is uncharacterized protein (93 aa).

This is an uncharacterized protein from Sulfolobus islandicus filamentous virus (isolate Iceland/Hveragerdi) (SIFV).